A 607-amino-acid polypeptide reads, in one-letter code: Thymidine kinase (607 aa).

Disordered stretches follow at residues 1–160 and 180–215; these read MAGF…ADST and DDKS…PSGL. Basic and acidic residues predominate over residues 17-32; sequence KCQEDESPENERHENF. Composition is skewed to polar residues over residues 88 to 106, 148 to 160, and 194 to 203; these read AAVT…TSCP, RKTS…ADST, and RRPSSHSALK. 291–298 serves as a coordination point for ATP; the sequence is GAPGVGKT. E317 (proton acceptor) is an active-site residue. Q355 is a binding site for substrate. R445 lines the ATP pocket. Substrate is bound at residue R451.

Belongs to the herpesviridae thymidine kinase family. In terms of assembly, homodimer.

It is found in the virion tegument. The protein resides in the host nucleus. It carries out the reaction thymidine + ATP = dTMP + ADP + H(+). In terms of biological role, catalyzes the transfer of the gamma-phospho group of ATP to thymidine to generate dTMP in the salvage pathway of pyrimidine synthesis. The dTMP serves as a substrate for DNA polymerase during viral DNA replication. Allows the virus to be reactivated and to grow in non-proliferative cells lacking a high concentration of phosphorylated nucleic acid precursors. The sequence is that of Thymidine kinase from Epstein-Barr virus (strain GD1) (HHV-4).